The following is a 421-amino-acid chain: GTPase Obg (421 aa).

The 158-residue stretch at 4 to 161 folds into the Obg domain; that stretch reads LHFIDEAFNE…FKIKIQLKVL (158 aa). Positions 162-327 constitute an OBG-type G domain; sequence ADVGLLGFPS…LKYAIKNLLQ (166 aa). GTP is bound by residues 168–175, 193–197, 214–217, 281–284, and 308–310; these read GFPSVGKS, FTTLF, DLPG, NKMD, and SLI. Residues Ser175 and Thr195 each coordinate Mg(2+). An OCT domain is found at 343–421; that stretch reads DLNSETQTFT…ICNYLFDFVI (79 aa).

This sequence belongs to the TRAFAC class OBG-HflX-like GTPase superfamily. OBG GTPase family. In terms of assembly, monomer. The cofactor is Mg(2+).

Its subcellular location is the cytoplasm. An essential GTPase which binds GTP, GDP and possibly (p)ppGpp with moderate affinity, with high nucleotide exchange rates and a fairly low GTP hydrolysis rate. Plays a role in control of the cell cycle, stress response, ribosome biogenesis and in those bacteria that undergo differentiation, in morphogenesis control. The protein is GTPase Obg of Phytoplasma australiense.